Reading from the N-terminus, the 376-residue chain is UDP-N-acetylglucosamine 2-epimerase (376 aa).

Substrate contacts are provided by residues arginine 10, lysine 15, aspartate 95, glutamate 117, histidine 213, glutamine 271, phenylalanine 276, serine 290–glycine 292, glutamate 296, and arginine 313.

It belongs to the UDP-N-acetylglucosamine 2-epimerase family. As to quaternary structure, homodimer.

It is found in the cytoplasm. It catalyses the reaction UDP-N-acetyl-alpha-D-glucosamine = UDP-N-acetyl-alpha-D-mannosamine. It functions in the pathway bacterial outer membrane biogenesis; enterobacterial common antigen biosynthesis. Its function is as follows. Catalyzes the reversible epimerization at C-2 of UDP-N-acetylglucosamine (UDP-GlcNAc) and thereby provides bacteria with UDP-N-acetylmannosamine (UDP-ManNAc), the activated donor of ManNAc residues. The protein is UDP-N-acetylglucosamine 2-epimerase of Yersinia pestis.